The primary structure comprises 116 residues: Putative transmembrane protein ORF116 (116 aa).

Helical transmembrane passes span 20-40 (IVTL…AYAL), 53-73 (LLGG…TNSI), and 76-96 (FRGA…DVIN).

Its subcellular location is the host membrane. This is Putative transmembrane protein ORF116 from Acidianus bottle-shaped virus (isolate Italy/Pozzuoli) (ABV).